An 89-amino-acid chain; its full sequence is Small ribosomal subunit protein uS15 (89 aa).

This sequence belongs to the universal ribosomal protein uS15 family. Part of the 30S ribosomal subunit. Forms a bridge to the 50S subunit in the 70S ribosome, contacting the 23S rRNA.

Its function is as follows. One of the primary rRNA binding proteins, it binds directly to 16S rRNA where it helps nucleate assembly of the platform of the 30S subunit by binding and bridging several RNA helices of the 16S rRNA. Functionally, forms an intersubunit bridge (bridge B4) with the 23S rRNA of the 50S subunit in the ribosome. The sequence is that of Small ribosomal subunit protein uS15 from Nitratidesulfovibrio vulgaris (strain DP4) (Desulfovibrio vulgaris).